Consider the following 440-residue polypeptide: 5-hydroxytryptamine receptor 6 (440 aa).

Topologically, residues 1-27 are extracellular; the sequence is MVPEPGPTANSTPAWGAGPPSAPGGSG. Residues 28-52 traverse the membrane as a helical segment; it reads WVAAALCVVIALTAAANSLLIALIC. Over 53–62 the chain is Cytoplasmic; it reads TQPALRNTSN. Residues 63-88 form a helical membrane-spanning segment; sequence FFLVSLFTSDLMVGLVVMPPAMLNAL. Residues 89–96 are Extracellular-facing; it reads YGRWVLAR. A helical membrane pass occupies residues 97–122; it reads GLCLLWTAFDVMCCSASILNLCLISL. An intrachain disulfide couples C99 to C180. Position 106 (D106) interacts with serotonin. Residues 123–142 lie on the Cytoplasmic side of the membrane; it reads DRYLLILSPLRYKLRMTPLR. Residues 143–167 traverse the membrane as a helical segment; the sequence is ALALVLGAWSLAALASFLPLLLGWH. Residues 168–185 are Extracellular-facing; it reads ELGHARPPVPGQCRLLAS. The chain crosses the membrane as a helical span at residues 186–209; sequence LPFVLVASGLTFFLPSGAICFTYC. The Cytoplasmic portion of the chain corresponds to 210 to 266; that stretch reads RILLAARKQAVQVASLTTGMASQASETLQVPRTPRPGVESADSRRLATKHSRKALKA. Residues 267–293 traverse the membrane as a helical segment; sequence SLTLGILLGMFFVTWLPFFVANIVQAV. N288 provides a ligand contact to serotonin. Topologically, residues 294 to 299 are extracellular; that stretch reads CDCISP. A helical membrane pass occupies residues 300–323; it reads GLFDVLTWLGYCNSTMNPIIYPLF. The Cytoplasmic portion of the chain corresponds to 324–440; sequence MRDFKRALGR…RPHPLGIPTN (117 aa). A disordered region spans residues 346–392; the sequence is ASLASPSLRTSHSGPRPGLSLQQVLPLPLPPDSDSDSDAGSGGSSGL. The segment covering 347–358 has biased composition (polar residues); sequence SLASPSLRTSHS. Positions 362–371 are enriched in low complexity; sequence PGLSLQQVLP.

Belongs to the G-protein coupled receptor 1 family. Interacts with MTOR, RPTOR and NF1. Interacts with CDK5. In terms of tissue distribution, expressed in several human brain regions, most prominently in the caudate nucleus.

It is found in the cell membrane. Its function is as follows. G-protein coupled receptor for 5-hydroxytryptamine (serotonin), a biogenic hormone that functions as a neurotransmitter, a hormone and a mitogen. Also has a high affinity for tricyclic psychotropic drugs. Ligand binding causes a conformation change that triggers signaling via guanine nucleotide-binding proteins (G proteins) and modulates the activity of downstream effectors. HTR6 is coupled to G(s) G alpha proteins and mediates activation of adenylate cyclase activity. Controls pyramidal neurons migration during corticogenesis, through the regulation of CDK5 activity. Is an activator of mTOR signaling. This Homo sapiens (Human) protein is 5-hydroxytryptamine receptor 6.